The sequence spans 128 residues: Large-conductance mechanosensitive channel (128 aa).

The next 2 helical transmembrane spans lie at 11–31 (FALK…AAFG) and 70–90 (GAFI…FIFV).

Belongs to the MscL family. Homopentamer.

The protein resides in the cell membrane. Its function is as follows. Channel that opens in response to stretch forces in the membrane lipid bilayer. May participate in the regulation of osmotic pressure changes within the cell. The chain is Large-conductance mechanosensitive channel from Listeria monocytogenes serotype 4b (strain CLIP80459).